Here is a 486-residue protein sequence, read N- to C-terminus: uncharacterized protein (486 aa).

Residue 24–35 (IVHLGFGAFHRA) coordinates NAD(+).

This sequence belongs to the mannitol dehydrogenase family. UxuB subfamily.

This is an uncharacterized protein from Escherichia coli (strain K12).